Consider the following 290-residue polypeptide: MTLTQRLVHYEKLMRLDKPIGILLLLWPTLWGLWLAAEGVPRLDILLIFVLGTVLMRSAGCVVNDYADRNFDGHVERTRTRPLALGAVSTREALLLAAGLSLVAFLLIQPLNRLTIELSFVALFLAASYPFTKRFFAMPQAYLGIAFSFGIPMAFAAQTGEVPFPAWFLMGANLLWVIAYDTEYAMVDKVDDLRIGIKTSAITFGRFDVVGVVLCHMAFLAGMVAIGLLQNLGVIYYIGLATALGLILYQYRLIHDRDRARCFKAFLHNNWVGATIFAGIVLDYLVRAAS.

9 helical membrane-spanning segments follow: residues 20-40 (IGILLLLWPTLWGLWLAAEGV), 43-63 (LDILLIFVLGTVLMRSAGCVV), 92-112 (EALLLAAGLSLVAFLLIQPLN), 114-131 (LTIELSFVALFLAASYPF), 135-155 (FFAMPQAYLGIAFSFGIPMAF), 160-180 (GEVPFPAWFLMGANLLWVIAY), 209-229 (VVGVVLCHMAFLAGMVAIGLL), 231-251 (NLGVIYYIGLATALGLILYQY), and 266-286 (FLHNNWVGATIFAGIVLDYLV).

It belongs to the UbiA prenyltransferase family. Mg(2+) is required as a cofactor.

The protein resides in the cell inner membrane. The catalysed reaction is all-trans-octaprenyl diphosphate + 4-hydroxybenzoate = 4-hydroxy-3-(all-trans-octaprenyl)benzoate + diphosphate. The protein operates within cofactor biosynthesis; ubiquinone biosynthesis. In terms of biological role, catalyzes the prenylation of para-hydroxybenzoate (PHB) with an all-trans polyprenyl group. Mediates the second step in the final reaction sequence of ubiquinone-8 (UQ-8) biosynthesis, which is the condensation of the polyisoprenoid side chain with PHB, generating the first membrane-bound Q intermediate 3-octaprenyl-4-hydroxybenzoate. The polypeptide is 4-hydroxybenzoate octaprenyltransferase (Nitrosospira multiformis (strain ATCC 25196 / NCIMB 11849 / C 71)).